We begin with the raw amino-acid sequence, 400 residues long: Subtilisin-like protease 7 (400 aa).

The signal sequence occupies residues 1–20 (MGFITKAIPLALAAMSVVNG). A propeptide spanning residues 21-119 (AEILETRAGV…IERDARVQIN (99 aa)) is cleaved from the precursor. Residues 36–118 (KYIVIMNDGV…YIERDARVQI (83 aa)) enclose the Inhibitor I9 domain. The Peptidase S8 domain occupies 129 to 400 (SWGLARVGSR…GKLINNGSGK (272 aa)). Active-site charge relay system residues include aspartate 161 and histidine 192. Asparagine 222 and asparagine 252 each carry an N-linked (GlcNAc...) asparagine glycan. Serine 346 (charge relay system) is an active-site residue. Asparagine 396 carries N-linked (GlcNAc...) asparagine glycosylation.

This sequence belongs to the peptidase S8 family.

It is found in the secreted. In terms of biological role, secreted subtilisin-like serine protease with keratinolytic activity that contributes to pathogenicity. The sequence is that of Subtilisin-like protease 7 (SUB7) from Arthroderma otae (strain ATCC MYA-4605 / CBS 113480) (Microsporum canis).